The following is a 400-amino-acid chain: Subtilisin-like protease CPC735_013700 (400 aa).

Residues Met-1–Ala-19 form the signal peptide. The propeptide occupies Ala-20–Ser-116. An Inhibitor I9 domain is found at Tyr-36 to Ile-115. In terms of domain architecture, Peptidase S8 spans Ser-126–Lys-400. Residues Asp-161 and His-192 each act as charge relay system in the active site. A glycan (N-linked (GlcNAc...) asparagine) is linked at Asn-252. The active-site Charge relay system is the Ser-346. N-linked (GlcNAc...) asparagine glycosylation is present at Asn-396.

Belongs to the peptidase S8 family.

The protein localises to the secreted. Secreted subtilisin-like serine protease with keratinolytic activity that contributes to pathogenicity. This is Subtilisin-like protease CPC735_013700 from Coccidioides posadasii (strain C735) (Valley fever fungus).